The following is a 595-amino-acid chain: TNF receptor-associated factor family protein DDB_G0272348 (595 aa).

Positions 14-64 (SFTNNNSNNNNNNNNNSNSNNNNNNNNNNINNNNNHNNNNKNNSNNKNEIN) are disordered. The span at 17–64 (NNNSNNNNNNNNNSNSNNNNNNNNNNINNNNNHNNNNKNNSNNKNEIN) shows a compositional bias: low complexity. The RING-type; degenerate zinc finger occupies 87–134 (CTICSDLLVNSFHADKFKAVQCKNGHYTTCLNCWEKHLEKKKNCIQCG). TRAF-type zinc fingers lie at residues 189–253 (EHLK…INKE) and 254–311 (SHNA…SKLS). Positions 348–410 (LLNGQNKKIT…QQQQSQQQQQ (63 aa)) form a coiled coil. Low complexity predominate over residues 409–440 (QQSQQQQQSQQSQQNNNSNSHFINNNNNNINN). Positions 409-450 (QQSQQQQQSQQSQQNNNSNSHFINNNNNNINNVQMSDSPNGG) are disordered. The span at 441–450 (VQMSDSPNGG) shows a compositional bias: polar residues. The MATH domain occupies 456-584 (VYKNKWVISN…NDSITIEIEI (129 aa)).

The protein belongs to the TNF receptor-associated factor family. A subfamily.

The protein resides in the cytoplasm. Functionally, probable adapter protein and signal transducer that links members of the tumor necrosis factor receptor family to different signaling pathways by association with the receptor cytoplasmic domain and kinases. This is TNF receptor-associated factor family protein DDB_G0272348 from Dictyostelium discoideum (Social amoeba).